We begin with the raw amino-acid sequence, 85 residues long: ATP synthase subunit c (85 aa).

2 consecutive transmembrane segments (helical) span residues 10–30 and 53–73; these read IAVA…FAIL and FIVA…ALFF.

It belongs to the ATPase C chain family. F-type ATPases have 2 components, F(1) - the catalytic core - and F(0) - the membrane proton channel. F(1) has five subunits: alpha(3), beta(3), gamma(1), delta(1), epsilon(1). F(0) has three main subunits: a(1), b(2) and c(10-14). The alpha and beta chains form an alternating ring which encloses part of the gamma chain. F(1) is attached to F(0) by a central stalk formed by the gamma and epsilon chains, while a peripheral stalk is formed by the delta and b chains.

Its subcellular location is the cell inner membrane. Its function is as follows. F(1)F(0) ATP synthase produces ATP from ADP in the presence of a proton or sodium gradient. F-type ATPases consist of two structural domains, F(1) containing the extramembraneous catalytic core and F(0) containing the membrane proton channel, linked together by a central stalk and a peripheral stalk. During catalysis, ATP synthesis in the catalytic domain of F(1) is coupled via a rotary mechanism of the central stalk subunits to proton translocation. Key component of the F(0) channel; it plays a direct role in translocation across the membrane. A homomeric c-ring of between 10-14 subunits forms the central stalk rotor element with the F(1) delta and epsilon subunits. This is ATP synthase subunit c from Shewanella halifaxensis (strain HAW-EB4).